A 254-amino-acid polypeptide reads, in one-letter code: MEGRIRVTEFLLSVPAIGTTKTQDALRRLGIAPSKRLGGLGRHQRLRLRVFLIEREERPVRRRKHLVVLAGPTAVGKGTVSAYIRENYPEVLLSVSATTRSPRPGEVDGVNYYFVDDAAFDRMIAAGDLLEHATVHNAYRYGTPRAPIEKALDDGRSVLLEIDLQGARQVRASMPEARLIFLLPPTWEELVRRLTGRGTEDAAEQQRRLETAKVELAAQNEFDHRVVNHTVADAAREVVDLMMVRPAPVRPSTA.

The region spanning lysine 64–methionine 243 is the Guanylate kinase-like domain. Residue glycine 71 to glycine 78 coordinates ATP.

It belongs to the guanylate kinase family.

It is found in the cytoplasm. The catalysed reaction is GMP + ATP = GDP + ADP. Essential for recycling GMP and indirectly, cGMP. This is Guanylate kinase from Leifsonia xyli subsp. xyli (strain CTCB07).